A 709-amino-acid chain; its full sequence is Polyribonucleotide nucleotidyltransferase (709 aa).

Residues Asp482 and Asp488 each contribute to the Mg(2+) site. Residues 549-608 (PRIITMSIDPDKIREVIGPGGKVINKIIAETGVKIDIEDDGRIFIAATDTEAANKAVRII) form the KH domain. The region spanning 618-686 (GKVYTGKVTR…KQGRINLSRK (69 aa)) is the S1 motif domain.

The protein belongs to the polyribonucleotide nucleotidyltransferase family. Mg(2+) is required as a cofactor.

The protein resides in the cytoplasm. It carries out the reaction RNA(n+1) + phosphate = RNA(n) + a ribonucleoside 5'-diphosphate. Functionally, involved in mRNA degradation. Catalyzes the phosphorolysis of single-stranded polyribonucleotides processively in the 3'- to 5'-direction. This Heliobacterium modesticaldum (strain ATCC 51547 / Ice1) protein is Polyribonucleotide nucleotidyltransferase.